A 71-amino-acid chain; its full sequence is Small ribosomal subunit protein bS21 (71 aa).

Belongs to the bacterial ribosomal protein bS21 family.

The chain is Small ribosomal subunit protein bS21 from Cellvibrio japonicus (strain Ueda107) (Pseudomonas fluorescens subsp. cellulosa).